The primary structure comprises 35 residues: Kappa-theraphotoxin-Gr1b (35 aa).

Intrachain disulfides connect Cys2–Cys16, Cys9–Cys21, and Cys15–Cys28. Residues Tyr4 to Phe6 are involved in active face.

Belongs to the neurotoxin 10 (Hwtx-1) family. 09 (HaTx) subfamily. Expressed by the venom gland.

Its subcellular location is the secreted. Its function is as follows. Inhibitor of voltage-gated potassium channels. Inhibits Kv2.1/KCNB1 channels, by shifting activation of the channel to more depolarized voltages. The toxin binding sites may be situated on the S3-S4 extracellular linker of the channel. One, two, three or four toxin molecules may bind the Kv2.1/KCNB1 channel. May need to partition into the membrane in order to bind to the channel. Antibacterial activity is not observed. This chain is Kappa-theraphotoxin-Gr1b, found in Grammostola rosea (Chilean rose tarantula).